The sequence spans 340 residues: Undecaprenyl-phosphate 4-deoxy-4-formamido-L-arabinose transferase (340 aa).

The next 2 membrane-spanning stretches (helical) occupy residues 235–255 and 269–289; these read LSIVGFAMAGLGVLFAAALIF and LFVLFAVLFVFTGGQFIGMGL.

It belongs to the glycosyltransferase 2 family.

It localises to the cell inner membrane. The catalysed reaction is UDP-4-deoxy-4-formamido-beta-L-arabinose + di-trans,octa-cis-undecaprenyl phosphate = 4-deoxy-4-formamido-alpha-L-arabinopyranosyl di-trans,octa-cis-undecaprenyl phosphate + UDP. Its pathway is glycolipid biosynthesis; 4-amino-4-deoxy-alpha-L-arabinose undecaprenyl phosphate biosynthesis; 4-amino-4-deoxy-alpha-L-arabinose undecaprenyl phosphate from UDP-4-deoxy-4-formamido-beta-L-arabinose and undecaprenyl phosphate: step 1/2. The protein operates within bacterial outer membrane biogenesis; lipopolysaccharide biosynthesis. Its function is as follows. Catalyzes the transfer of 4-deoxy-4-formamido-L-arabinose from UDP to undecaprenyl phosphate. The modified arabinose is attached to lipid A and is required for resistance to polymyxin and cationic antimicrobial peptides. The protein is Undecaprenyl-phosphate 4-deoxy-4-formamido-L-arabinose transferase of Pseudomonas fluorescens (strain Pf0-1).